The chain runs to 875 residues: Lysine-specific demethylase JMJ26 (875 aa).

The disordered stretch occupies residues 31 to 103; sequence KPVEATSLSS…RSSVKKRATT (73 aa). Residues 62-69 carry the Nuclear localization signal motif; the sequence is RKRSKADE. The segment covering 79 to 93 has biased composition (basic and acidic residues); that stretch reads KCDDENKCEENEKKQ. Zn(2+) is bound by residues Cys193, Cys196, Cys207, Cys210, Cys216, Cys219, Cys236, Cys239, Cys322, Cys325, Cys339, and Cys347. The RING-type; degenerate zinc finger occupies 193–240; it reads CHQCSKGERRYLFICTFCEVRLYCFPCIKKWYPHLSTDDILEKCPFCR. The segment at 317 to 347 adopts a B box-type; degenerate zinc-finger fold; the sequence is EERVFCNHCATSIVDLHRSCPKCSYELCLNC. A JmjC domain is found at 614–837; it reads PRSGILNIAT…ECLRLTDEFR (224 aa). Residues His658, Asp660, and His805 each contribute to the Fe cation site.

The protein belongs to the JARID1 histone demethylase family. Fe(2+) is required as a cofactor. As to expression, expressed in inflorescences, roots, siliques, leaves and stems.

It localises to the nucleus. Functionally, may function as histone H3 lysine demethylase and be involved in regulation of gene expression. This chain is Lysine-specific demethylase JMJ26, found in Arabidopsis thaliana (Mouse-ear cress).